A 24-amino-acid chain; its full sequence is Coenzyme PQQ synthesis protein A (24 aa).

Residues 16-20 (EVTMY) constitute a cross-link (pyrroloquinoline quinone (Glu-Tyr)).

It belongs to the PqqA family.

It participates in cofactor biosynthesis; pyrroloquinoline quinone biosynthesis. Functionally, required for coenzyme pyrroloquinoline quinone (PQQ) biosynthesis. PQQ is probably formed by cross-linking a specific glutamate to a specific tyrosine residue and excising these residues from the peptide. In Pseudomonas fluorescens (strain Pf0-1), this protein is Coenzyme PQQ synthesis protein A.